Here is a 282-residue protein sequence, read N- to C-terminus: Armadillo repeat-containing protein 1 (282 aa).

M1 carries the N-acetylmethionine modification. An ARM repeat occupies 39–81 (GCLPGLILFMDHPNPPVVHSALLALRYLAECRANREKMKGELG). The residue at position 137 (T137) is a Phosphothreonine. Phosphoserine is present on residues S189, S246, S260, and S267. Residues 239 to 261 (DYLPEDESPTKEQDKAVSRVGSH) form a disordered region. Positions 246 to 255 (SPTKEQDKAV) are enriched in basic and acidic residues.

As to quaternary structure, interacts with mitochondrial contact site and cristae organizing system (MICOS) complex components IMMT/MIC60 and MICOS10/MIC10. Interacts with mitochondrial outer membrane sorting assembly machinery (SAM) complex components SAMM50 and MTX1.

The protein localises to the cytoplasm. Its subcellular location is the mitochondrion. The protein resides in the mitochondrion outer membrane. Functionally, in association with mitochondrial contact site and cristae organizing system (MICOS) complex components and mitochondrial outer membrane sorting assembly machinery (SAM) complex components may regulate mitochondrial dynamics playing a role in determining mitochondrial length, distribution and motility. This is Armadillo repeat-containing protein 1 (ARMC1) from Bos taurus (Bovine).